The primary structure comprises 659 residues: Threonine--tRNA ligase (659 aa).

The TGS domain maps to 1–60 (MTVYLPDGKPLELPEGATAKDVARALGEGWERRAVGAIVDGELYDLLKPLPQGAKVRLLT). A catalytic region spans residues 252-552 (DHRRLGRELE…LIEHFAGDFP (301 aa)). Residues C349, H400, and H529 each contribute to the Zn(2+) site.

Belongs to the class-II aminoacyl-tRNA synthetase family. Homodimer. It depends on Zn(2+) as a cofactor.

Its subcellular location is the cytoplasm. The enzyme catalyses tRNA(Thr) + L-threonine + ATP = L-threonyl-tRNA(Thr) + AMP + diphosphate + H(+). Its function is as follows. Catalyzes the attachment of threonine to tRNA(Thr) in a two-step reaction: L-threonine is first activated by ATP to form Thr-AMP and then transferred to the acceptor end of tRNA(Thr). Also edits incorrectly charged L-seryl-tRNA(Thr). The sequence is that of Threonine--tRNA ligase from Thermus thermophilus (strain ATCC BAA-163 / DSM 7039 / HB27).